Consider the following 543-residue polypeptide: Headcase protein homolog (543 aa).

Disordered regions lie at residues 1-26 (MPNPKNSKGGRKNKRANSSGDEQENG) and 197-283 (MQDE…LSPA). 2 stretches are compositionally biased toward basic and acidic residues: residues 197–211 (MQDEKKKKSGSEKNT) and 235–250 (PSHDLPRRHSMDRQNS). S264 and S268 each carry phosphoserine.

In terms of tissue distribution, expressed in all tissues examined. Highest levels are in the spleen, thymus, peripheral blood and heart. Lowest in the kidney and pancreas.

Its function is as follows. May play an important role in some human cancers. May be part of the regulatory mechanism in the development of epithelial tube networks such as the circulatory system and lungs. The sequence is that of Headcase protein homolog (HECA) from Homo sapiens (Human).